A 387-amino-acid chain; its full sequence is Lipid-A-disaccharide synthase (387 aa).

The protein belongs to the LpxB family.

The catalysed reaction is a lipid X + a UDP-2-N,3-O-bis[(3R)-3-hydroxyacyl]-alpha-D-glucosamine = a lipid A disaccharide + UDP + H(+). The protein operates within bacterial outer membrane biogenesis; LPS lipid A biosynthesis. In terms of biological role, condensation of UDP-2,3-diacylglucosamine and 2,3-diacylglucosamine-1-phosphate to form lipid A disaccharide, a precursor of lipid A, a phosphorylated glycolipid that anchors the lipopolysaccharide to the outer membrane of the cell. This chain is Lipid-A-disaccharide synthase, found in Glaesserella parasuis serovar 5 (strain SH0165) (Haemophilus parasuis).